We begin with the raw amino-acid sequence, 1228 residues long: DNA-directed RNA polymerase subunit beta (1228 aa).

It belongs to the RNA polymerase beta chain family. As to quaternary structure, the RNAP catalytic core consists of 2 alpha, 1 beta, 1 beta' and 1 omega subunit. When a sigma factor is associated with the core the holoenzyme is formed, which can initiate transcription.

The catalysed reaction is RNA(n) + a ribonucleoside 5'-triphosphate = RNA(n+1) + diphosphate. In terms of biological role, DNA-dependent RNA polymerase catalyzes the transcription of DNA into RNA using the four ribonucleoside triphosphates as substrates. This Leptospira biflexa serovar Patoc (strain Patoc 1 / Ames) protein is DNA-directed RNA polymerase subunit beta.